Reading from the N-terminus, the 373-residue chain is Chaperone protein DnaJ (373 aa).

A J domain is found at 5–70 (DYYEVLGVHR…QQRVIYDQYG (66 aa)). The CR-type zinc finger occupies 136 to 214 (GLETKIQIPR…CHGSGRVRGK (79 aa)). Zn(2+)-binding residues include Cys-149, Cys-152, Cys-166, Cys-169, Cys-188, Cys-191, Cys-202, and Cys-205. CXXCXGXG motif repeat units follow at residues 149 to 156 (CGTCDGIG), 166 to 173 (CPTCQGAG), 188 to 195 (CPECNGEG), and 202 to 209 (CEECHGSG).

The protein belongs to the DnaJ family. As to quaternary structure, homodimer. Zn(2+) serves as cofactor.

Its subcellular location is the cytoplasm. In terms of biological role, participates actively in the response to hyperosmotic and heat shock by preventing the aggregation of stress-denatured proteins and by disaggregating proteins, also in an autonomous, DnaK-independent fashion. Unfolded proteins bind initially to DnaJ; upon interaction with the DnaJ-bound protein, DnaK hydrolyzes its bound ATP, resulting in the formation of a stable complex. GrpE releases ADP from DnaK; ATP binding to DnaK triggers the release of the substrate protein, thus completing the reaction cycle. Several rounds of ATP-dependent interactions between DnaJ, DnaK and GrpE are required for fully efficient folding. Also involved, together with DnaK and GrpE, in the DNA replication of plasmids through activation of initiation proteins. This is Chaperone protein DnaJ from Syntrophotalea carbinolica (strain DSM 2380 / NBRC 103641 / GraBd1) (Pelobacter carbinolicus).